A 293-amino-acid chain; its full sequence is Histamine N-methyltransferase B (293 aa).

Glutamate 28 serves as a coordination point for substrate. 5 residues coordinate S-adenosyl-L-methionine: glycine 60, glutamate 89, glutamine 94, serine 120, and isoleucine 142. Asparagine 283 serves as a coordination point for substrate.

It belongs to the class I-like SAM-binding methyltransferase superfamily. HNMT family. As to quaternary structure, monomer.

Its subcellular location is the cytoplasm. It catalyses the reaction histamine + S-adenosyl-L-methionine = N(tau)-methylhistamine + S-adenosyl-L-homocysteine + H(+). Inactivates histamine by N-methylation. Plays an important role in degrading histamine and in regulating the airway response to histamine. The protein is Histamine N-methyltransferase B (hnmt-b) of Xenopus laevis (African clawed frog).